The following is a 577-amino-acid chain: Urease subunit alpha (577 aa).

Positions 136–577 constitute a Urease domain; the sequence is GAIDCHVHLI…LPMAQRYFLF (442 aa). Ni(2+) is bound by residues histidine 141, histidine 143, and lysine 224. An N6-carboxylysine modification is found at lysine 224. Residue histidine 226 participates in substrate binding. The Ni(2+) site is built by histidine 253 and histidine 279. Histidine 327 (proton donor) is an active-site residue. A Ni(2+)-binding site is contributed by aspartate 367.

Belongs to the metallo-dependent hydrolases superfamily. Urease alpha subunit family. In terms of assembly, heterotrimer of UreA (gamma), UreB (beta) and UreC (alpha) subunits. Three heterotrimers associate to form the active enzyme. It depends on Ni cation as a cofactor. Post-translationally, carboxylation allows a single lysine to coordinate two nickel ions.

The protein localises to the cytoplasm. It carries out the reaction urea + 2 H2O + H(+) = hydrogencarbonate + 2 NH4(+). The protein operates within nitrogen metabolism; urea degradation; CO(2) and NH(3) from urea (urease route): step 1/1. The protein is Urease subunit alpha of Mycobacterium marinum (strain ATCC BAA-535 / M).